We begin with the raw amino-acid sequence, 365 residues long: Peptidyl-prolyl cis-trans isomerase FKBP42 (365 aa).

Residues 1–15 (MDESLEHQTQTHDQE) show a composition bias toward basic and acidic residues. A disordered region spans residues 1-44 (MDESLEHQTQTHDQESEIVTEGSAVVHSEPSQEGNVPPKVDSEA). An interaction with MDR1/PGP1 region spans residues 1–163 (MDESLEHQTQ…EVIGFDETKE (163 aa)). Residues 67 to 159 (YSTCFLHYRA…LYEVEVIGFD (93 aa)) enclose the PPIase FKBP-type domain. Residues 163–337 (EGKARSDMTV…GKDEGGAKSK (175 aa)) are interaction with MRP1. 3 TPR repeats span residues 179–212 (ADRRKMDGNSLFKEEKLEEAMQQYEMAIAYMGDD), 230–263 (NPCHLNIAACLIKLKRYDEAIGHCNIVLTEEEKN), and 264–297 (PKALFRRGKAKAELGQMDSARDDFRKAQKYAPDD). Residues 310–326 (QEKALYQKQKEMYKGIF) form a calmodulin-binding region. The helical; Anchor for type IV membrane protein transmembrane segment at 338–357 (SLFWLIVLWQWFVSLFSRIF) threads the bilayer.

Belongs to the FKBP-type PPIase family. As to quaternary structure, interacts with calmodulin (CaM), MRP1, MRP2, MDR1/PGP1, MDR11/PGP19 and SHD/HSP90. Interacts with 1-naphthylphthalamic acid (NPA).

The protein localises to the cell membrane. It localises to the vacuole membrane. The protein resides in the endoplasmic reticulum. It catalyses the reaction [protein]-peptidylproline (omega=180) = [protein]-peptidylproline (omega=0). In terms of biological role, PPIases accelerate the folding of proteins. It catalyzes the cis-trans isomerization of proline imidic peptide bonds in oligopeptides. Modulates the uptake of MRP substrates into the vacuole; reduces metolachlor-GS (MOC-GS) and enhances 17-beta-estradiol 17-(beta-D-glucuronide) (E(2)17betaG) uptake. Regulates cell elongation and orientation. Functions as a positive regulator of PGP1-mediated auxin transport. Confers drug modulation of PGP1 efflux activity as interaction with NPA or flavonol quercetin prevents its physical and functional interaction with PGP1. Required for the proper localization of auxin-related ABCB transporters. Plays a role in brassinosteroid (BR) signaling pathway. Required for seed development by promoting stamen elongation and, to a lesser extent, anther dehiscence and pollen maturation, probably as a chaperone helping ABCB1 and ABCB19 auxin transporters localization and activation. Involved in auxin signaling in nectaries to promote starch accumulation to attract visiting pollinators. In Arabidopsis thaliana (Mouse-ear cress), this protein is Peptidyl-prolyl cis-trans isomerase FKBP42.